The sequence spans 59 residues: Cecropin-C type 2 (59 aa).

The N-terminal stretch at 1–23 is a signal peptide; it reads MNFAKVFVLVAMAVLLLVGQSEA.

The protein belongs to the cecropin family.

The protein localises to the secreted. Functionally, cecropins have lytic and antibacterial activity against several Gram-positive and Gram-negative bacteria. The protein is Cecropin-C type 2 (CECC2) of Aedes albopictus (Asian tiger mosquito).